Here is a 142-residue protein sequence, read N- to C-terminus: Putative regulator of rDNA transcription protein 16 (142 aa).

3 helical membrane passes run 19 to 39, 84 to 104, and 111 to 131; these read ILLT…VMVA, FLLF…AIFL, and SIFI…GLCH.

The protein resides in the membrane. Identified in a screen for mutants with decreased levels of rDNA transcription. This Saccharomyces cerevisiae (strain ATCC 204508 / S288c) (Baker's yeast) protein is Putative regulator of rDNA transcription protein 16 (RRT16).